Reading from the N-terminus, the 176-residue chain is Ribosome maturation factor RimM (176 aa).

In terms of domain architecture, PRC barrel spans 95–169; it reads EDEVYLFELE…TARIAPPPGL (75 aa).

This sequence belongs to the RimM family. Binds ribosomal protein uS19.

The protein localises to the cytoplasm. An accessory protein needed during the final step in the assembly of 30S ribosomal subunit, possibly for assembly of the head region. Essential for efficient processing of 16S rRNA. May be needed both before and after RbfA during the maturation of 16S rRNA. It has affinity for free ribosomal 30S subunits but not for 70S ribosomes. This is Ribosome maturation factor RimM from Nitratidesulfovibrio vulgaris (strain ATCC 29579 / DSM 644 / CCUG 34227 / NCIMB 8303 / VKM B-1760 / Hildenborough) (Desulfovibrio vulgaris).